The primary structure comprises 329 residues: Glycerol-3-phosphate dehydrogenase [NAD(P)+] (329 aa).

4 residues coordinate NADPH: Ser10, Trp11, Arg31, and Lys105. Residues Lys105, Gly134, and Ser136 each coordinate sn-glycerol 3-phosphate. Ala138 contributes to the NADPH binding site. Sn-glycerol 3-phosphate-binding residues include Lys189, Asp242, Ser252, Arg253, and Asn254. Lys189 (proton acceptor) is an active-site residue. NADPH is bound at residue Arg253. Positions 277 and 279 each coordinate NADPH.

It belongs to the NAD-dependent glycerol-3-phosphate dehydrogenase family.

The protein localises to the cytoplasm. It catalyses the reaction sn-glycerol 3-phosphate + NAD(+) = dihydroxyacetone phosphate + NADH + H(+). It carries out the reaction sn-glycerol 3-phosphate + NADP(+) = dihydroxyacetone phosphate + NADPH + H(+). It functions in the pathway membrane lipid metabolism; glycerophospholipid metabolism. Catalyzes the reduction of the glycolytic intermediate dihydroxyacetone phosphate (DHAP) to sn-glycerol 3-phosphate (G3P), the key precursor for phospholipid synthesis. The sequence is that of Glycerol-3-phosphate dehydrogenase [NAD(P)+] from Neisseria gonorrhoeae (strain ATCC 700825 / FA 1090).